Consider the following 223-residue polypeptide: Small ribosomal subunit protein uS5 (223 aa).

Low complexity predominate over residues 1-15 (MTEAVAAEATETAPA). The disordered stretch occupies residues 1–51 (MTEAVAAEATETAPATDDRRGGRRGERGDRGQGRGDRGGRGGRDGGREAEK). Residues 16–51 (TDDRRGGRRGERGDRGQGRGDRGGRGGRDGGREAEK) show a composition bias toward basic and acidic residues. Residues 54–117 (FVERVVTINR…EEAKKSFFRV (64 aa)) enclose the S5 DRBM domain.

It belongs to the universal ribosomal protein uS5 family. As to quaternary structure, part of the 30S ribosomal subunit. Contacts proteins S4 and S8.

With S4 and S12 plays an important role in translational accuracy. In terms of biological role, located at the back of the 30S subunit body where it stabilizes the conformation of the head with respect to the body. The sequence is that of Small ribosomal subunit protein uS5 from Paenarthrobacter aurescens (strain TC1).